The chain runs to 670 residues: Protein angel homolog 1 (670 aa).

Residues S77 and S105 each carry the phosphoserine modification.

This sequence belongs to the CCR4/nocturin family.

The protein is Protein angel homolog 1 (ANGEL1) of Homo sapiens (Human).